Reading from the N-terminus, the 250-residue chain is Anti-sigma-L factor RslA (250 aa).

At 1–115 (MTMPLRGLGP…VHRRRRRTRL (115 aa)) the chain is on the cytoplasmic side. The chain crosses the membrane as a helical span at residues 116-136 (ITWVASSAAAAVLAIGVLVGV). The Extracellular segment spans residues 137 to 250 (QGHSAAPQRA…TGQVLLQRSL (114 aa)).

Interacts with ECF RNA polymerase sigma factor SigL; this should inhibit the interaction of SigL with the RNA polymerase catalytic core. In terms of processing, probably cleaved within the membrane by Rip1 near the cytoplasmic membrane interface.

It localises to the cell membrane. Functionally, an anti-sigma factor for extracytoplasmic function (ECF) sigma factor SigL. ECF sigma factors are held in an inactive form by an anti-sigma factor until released by regulated intramembrane proteolysis (RIP). RIP occurs when an extracytoplasmic signal triggers a concerted proteolytic cascade to transmit information and elicit cellular responses. The membrane-spanning regulatory substrate protein is first cut extracytoplasmically (site-1 protease, S1P), then within the membrane itself (site-2 protease, S2P, Rip1), while cytoplasmic proteases finish degrading the regulatory protein, liberating the sigma factor. This Mycobacterium tuberculosis (strain ATCC 35801 / TMC 107 / Erdman) protein is Anti-sigma-L factor RslA (rslA).